Consider the following 90-residue polypeptide: Probable Fe(2+)-trafficking protein (90 aa).

This sequence belongs to the Fe(2+)-trafficking protein family.

In terms of biological role, could be a mediator in iron transactions between iron acquisition and iron-requiring processes, such as synthesis and/or repair of Fe-S clusters in biosynthetic enzymes. The protein is Probable Fe(2+)-trafficking protein of Bordetella bronchiseptica (strain ATCC BAA-588 / NCTC 13252 / RB50) (Alcaligenes bronchisepticus).